Reading from the N-terminus, the 496-residue chain is Glutamyl-tRNA(Gln) amidotransferase subunit A, mitochondrial (496 aa).

Residues K75 and S162 each act as charge relay system in the active site. The Acyl-ester intermediate role is filled by S186.

This sequence belongs to the amidase family. GatA subfamily. As to quaternary structure, subunit of the heterotrimeric GatCAB amidotransferase (AdT) complex, composed of A, B and C subunits.

Its subcellular location is the mitochondrion. The enzyme catalyses L-glutamyl-tRNA(Gln) + L-glutamine + ATP + H2O = L-glutaminyl-tRNA(Gln) + L-glutamate + ADP + phosphate + H(+). Its function is as follows. Allows the formation of correctly charged Gln-tRNA(Gln) through the transamidation of misacylated Glu-tRNA(Gln) in the mitochondria. The reaction takes place in the presence of glutamine and ATP through an activated gamma-phospho-Glu-tRNA(Gln). The sequence is that of Glutamyl-tRNA(Gln) amidotransferase subunit A, mitochondrial from Pediculus humanus subsp. corporis (Body louse).